The sequence spans 340 residues: Protein-arginine kinase (340 aa).

A Phosphagen kinase C-terminal domain is found at 21-242; the sequence is VVLSSRIRLA…EQIIMQERIA (222 aa). ATP is bound by residues 24–28, His79, Arg113, 164–168, and 195–200; these read SSRIR, RASVM, and RGIYGE.

Belongs to the ATP:guanido phosphotransferase family.

It catalyses the reaction L-arginyl-[protein] + ATP = N(omega)-phospho-L-arginyl-[protein] + ADP + H(+). Catalyzes the specific phosphorylation of arginine residues in proteins. The sequence is that of Protein-arginine kinase from Listeria monocytogenes serotype 4a (strain HCC23).